Reading from the N-terminus, the 203-residue chain is dTTP/UTP pyrophosphatase (203 aa).

The active-site Proton acceptor is Asp70.

The protein belongs to the Maf family. YhdE subfamily. A divalent metal cation is required as a cofactor.

Its subcellular location is the cytoplasm. It catalyses the reaction dTTP + H2O = dTMP + diphosphate + H(+). The catalysed reaction is UTP + H2O = UMP + diphosphate + H(+). Functionally, nucleoside triphosphate pyrophosphatase that hydrolyzes dTTP and UTP. May have a dual role in cell division arrest and in preventing the incorporation of modified nucleotides into cellular nucleic acids. The sequence is that of dTTP/UTP pyrophosphatase (maf-1) from Pseudomonas putida (strain ATCC 47054 / DSM 6125 / CFBP 8728 / NCIMB 11950 / KT2440).